Consider the following 190-residue polypeptide: Early nodulin-like protein 12 (190 aa).

Positions 1–21 (MGIIVPVLTLVFLLFAKVSHG) are cleaved as a signal peptide. Residues 26–130 (RVILVGGSVG…GEKITLVVLA (105 aa)) form the Phytocyanin domain. Asn44 is a glycosylation site (N-linked (GlcNAc...) asparagine). The cysteines at positions 84 and 118 are disulfide-linked. Residues 135–164 (GGGSSSGDAPKVSPVSPTAQTPAPAPGPAA) form a disordered region. The span at 151 to 164 (PTAQTPAPAPGPAA) shows a compositional bias: low complexity. Asn167 carries GPI-anchor amidated asparagine lipidation. The propeptide at 168 to 190 (AAVGLKVASGWFLTAVVVGLAMA) is removed in mature form.

The protein belongs to the early nodulin-like (ENODL) family. Confined to flowers and siliques. Expressed in female gametophytes.

The protein resides in the cell membrane. In terms of biological role, may act as a carbohydrate transporter. Required, together with ENODL11, ENODL12, ENODL13, ENODL14 and ENODL15, for male-female communication and pollen tube reception and burst at the synergid cell surface of the female gametophyte. The polypeptide is Early nodulin-like protein 12 (Arabidopsis thaliana (Mouse-ear cress)).